A 435-amino-acid polypeptide reads, in one-letter code: Enolase (435 aa).

(2R)-2-phosphoglycerate is bound at residue Q163. E205 serves as the catalytic Proton donor. The Mg(2+) site is built by D243, E292, and D319. 4 residues coordinate (2R)-2-phosphoglycerate: K344, R373, S374, and K395. K344 (proton acceptor) is an active-site residue.

Belongs to the enolase family. The cofactor is Mg(2+).

The protein resides in the cytoplasm. Its subcellular location is the secreted. The protein localises to the cell surface. It carries out the reaction (2R)-2-phosphoglycerate = phosphoenolpyruvate + H2O. Its pathway is carbohydrate degradation; glycolysis; pyruvate from D-glyceraldehyde 3-phosphate: step 4/5. Catalyzes the reversible conversion of 2-phosphoglycerate (2-PG) into phosphoenolpyruvate (PEP). It is essential for the degradation of carbohydrates via glycolysis. The polypeptide is Enolase (Streptococcus agalactiae serotype Ia (strain ATCC 27591 / A909 / CDC SS700)).